A 321-amino-acid polypeptide reads, in one-letter code: Lipoyl synthase (321 aa).

[4Fe-4S] cluster-binding residues include Cys-68, Cys-73, Cys-79, Cys-94, Cys-98, Cys-101, and Ser-308. Positions 80–297 constitute a Radical SAM core domain; that stretch reads FNHGTATFMI…RVFAEEIGFT (218 aa).

It belongs to the radical SAM superfamily. Lipoyl synthase family. Requires [4Fe-4S] cluster as cofactor.

It is found in the cytoplasm. It carries out the reaction [[Fe-S] cluster scaffold protein carrying a second [4Fe-4S](2+) cluster] + N(6)-octanoyl-L-lysyl-[protein] + 2 oxidized [2Fe-2S]-[ferredoxin] + 2 S-adenosyl-L-methionine + 4 H(+) = [[Fe-S] cluster scaffold protein] + N(6)-[(R)-dihydrolipoyl]-L-lysyl-[protein] + 4 Fe(3+) + 2 hydrogen sulfide + 2 5'-deoxyadenosine + 2 L-methionine + 2 reduced [2Fe-2S]-[ferredoxin]. It participates in protein modification; protein lipoylation via endogenous pathway; protein N(6)-(lipoyl)lysine from octanoyl-[acyl-carrier-protein]: step 2/2. In terms of biological role, catalyzes the radical-mediated insertion of two sulfur atoms into the C-6 and C-8 positions of the octanoyl moiety bound to the lipoyl domains of lipoate-dependent enzymes, thereby converting the octanoylated domains into lipoylated derivatives. In Shewanella woodyi (strain ATCC 51908 / MS32), this protein is Lipoyl synthase.